Reading from the N-terminus, the 184-residue chain is Large ribosomal subunit protein uL5 (184 aa).

Belongs to the universal ribosomal protein uL5 family. In terms of assembly, part of the 50S ribosomal subunit; part of the 5S rRNA/L5/L18/L25 subcomplex. Contacts the 5S rRNA and the P site tRNA. Forms a bridge to the 30S subunit in the 70S ribosome.

This is one of the proteins that bind and probably mediate the attachment of the 5S RNA into the large ribosomal subunit, where it forms part of the central protuberance. In the 70S ribosome it contacts protein S13 of the 30S subunit (bridge B1b), connecting the 2 subunits; this bridge is implicated in subunit movement. Contacts the P site tRNA; the 5S rRNA and some of its associated proteins might help stabilize positioning of ribosome-bound tRNAs. This chain is Large ribosomal subunit protein uL5, found in Pelagibacter ubique (strain HTCC1062).